Here is a 218-residue protein sequence, read N- to C-terminus: N-(5'-phosphoribosyl)anthranilate isomerase (218 aa).

Belongs to the TrpF family.

It carries out the reaction N-(5-phospho-beta-D-ribosyl)anthranilate = 1-(2-carboxyphenylamino)-1-deoxy-D-ribulose 5-phosphate. The protein operates within amino-acid biosynthesis; L-tryptophan biosynthesis; L-tryptophan from chorismate: step 3/5. The protein is N-(5'-phosphoribosyl)anthranilate isomerase of Rhodopseudomonas palustris (strain HaA2).